Reading from the N-terminus, the 620-residue chain is 1-deoxy-D-xylulose-5-phosphate synthase (620 aa).

Thiamine diphosphate is bound by residues His80 and 121–123 (GHS). Residue Asp152 participates in Mg(2+) binding. Thiamine diphosphate-binding positions include 153–154 (GA), Asn181, Tyr288, and Glu370. Mg(2+) is bound at residue Asn181.

The protein belongs to the transketolase family. DXPS subfamily. As to quaternary structure, homodimer. Requires Mg(2+) as cofactor. It depends on thiamine diphosphate as a cofactor.

It carries out the reaction D-glyceraldehyde 3-phosphate + pyruvate + H(+) = 1-deoxy-D-xylulose 5-phosphate + CO2. The protein operates within metabolic intermediate biosynthesis; 1-deoxy-D-xylulose 5-phosphate biosynthesis; 1-deoxy-D-xylulose 5-phosphate from D-glyceraldehyde 3-phosphate and pyruvate: step 1/1. Functionally, catalyzes the acyloin condensation reaction between C atoms 2 and 3 of pyruvate and glyceraldehyde 3-phosphate to yield 1-deoxy-D-xylulose-5-phosphate (DXP). The chain is 1-deoxy-D-xylulose-5-phosphate synthase from Pseudoalteromonas translucida (strain TAC 125).